A 304-amino-acid polypeptide reads, in one-letter code: Putative S-adenosyl-L-methionine-dependent methyltransferase MAV_1058 (304 aa).

S-adenosyl-L-methionine-binding positions include Asp-128 and Asp-157 to Leu-158.

It belongs to the UPF0677 family.

Functionally, exhibits S-adenosyl-L-methionine-dependent methyltransferase activity. The protein is Putative S-adenosyl-L-methionine-dependent methyltransferase MAV_1058 of Mycobacterium avium (strain 104).